A 490-amino-acid polypeptide reads, in one-letter code: Betaine aldehyde dehydrogenase (490 aa).

I27 and D93 together coordinate K(+). Position 150 to 152 (150 to 152 (GAW)) interacts with NAD(+). The active-site Charge relay system is the K162. 176–179 (KPSE) lines the NAD(+) pocket. V180 is a K(+) binding site. 230-233 (GTTT) is a binding site for NAD(+). L246 is a binding site for K(+). The Proton acceptor role is filled by E252. 3 residues coordinate NAD(+): G254, C286, and E387. The Nucleophile role is filled by C286. A Cysteine sulfenic acid (-SOH) modification is found at C286. Positions 457 and 460 each coordinate K(+). Residue E464 is the Charge relay system of the active site.

The protein belongs to the aldehyde dehydrogenase family. In terms of assembly, dimer of dimers. The cofactor is K(+).

It carries out the reaction betaine aldehyde + NAD(+) + H2O = glycine betaine + NADH + 2 H(+). Its pathway is amine and polyamine biosynthesis; betaine biosynthesis via choline pathway; betaine from betaine aldehyde: step 1/1. In terms of biological role, involved in the biosynthesis of the osmoprotectant glycine betaine. Catalyzes the irreversible oxidation of betaine aldehyde to the corresponding acid. In Pseudomonas putida (strain GB-1), this protein is Betaine aldehyde dehydrogenase.